The primary structure comprises 359 residues: SAGA complex subunit Spt7 (359 aa).

In terms of assembly, component of the Spt-Ada-Gcn5 acetyltransferase (SAGA) complex consisting of wda/Taf5L, Saf6, Taf9, Taf10b, Taf12, Ada1, Spt3, Spt7, Spt20, Sf3b3, Sf3b5, Nipped-A/Tra1, a histone acetyltransferase (HAT) module made up of Gcn5, Ada2b (Isoform B), Ada3 and Sgf29, and a deubiquitinase (DUB) module made up of not/nonstop, Sgf11 and e(y)2 tethered to SAGA by Atxn7. Interacts with Ada2b; the interaction is direct.

Its subcellular location is the nucleus. In terms of biological role, component of the transcription regulatory complex SAGA, a multiprotein complex that activates transcription by remodeling chromatin and mediating histone acetylation and deubiquitination. The SAGA complex predominantly acetylates histone H3. In Drosophila melanogaster (Fruit fly), this protein is SAGA complex subunit Spt7.